A 1591-amino-acid chain; its full sequence is MGNAESQNVDHEFYGEKHASLGRKHTSRSLRLSHKTRRTRHASSGKAIHRNSEVSTRSSSTPSIPQSLAENGLEPFSQEGALDDFGDPIWVDRVDMGLRPVSYTDSSVTPSVDGSIVLTAASVQSMPDSEESRLYGDDATYLAEGGRRQCPYTSNGPTFMETASFKKKRSKSADIWREDSLEFSLSDLSQEHLTSNEEILGSAEEKDCEEARGMETEASPRQLSTCQRANSLGDLYAQKNSGVKANGGPRNRFSSYCRNLVSDIPDLAKHKMPPAAAEETPPYSNYNTLPCRKSHCLSEGATNPQISLSKSMQGRRAKTTQDVNTGEGSEFADSGIEGATTDTDLLSRRSNATNSSYSPPTGRAFVGSDSGSSSTGDRARQGVYENFRRELEMSTTNSESLEEAGSAHSDEQSSGTLSSPGQSDILLTAAQGTVRKAGALAVKNFLVHKKNKKVESATRRKWKHYWVSLKGCTLFFYETDGRSGIDHNSVPKHAVWVENSIVQAVPEHPKKDFVFCLSNSLGDAFLFQTTSQTELENWITAIHSACAAAVARHHHKEDTLRLLKSEIKKLEQKIDMDEKMKKMGEMQLSSVTDSKKKKTILDQIFVWEQNLEQFQMDLFRFRCYLASLQGGELPNPKRLLAFASRPTKVAMGRLGIFSVSSFHALVAARTGEIGVRRRTQAMSRSASKRRSRFSSLWGLDTTSKKKQGRPTINQVFGEGTDAVKRSLEGIFDDTVPDGKREKEVVLPSVHQHNPDCDIWVHEYFTPSWFCLPNNQPALTVVRPGDTARDTLELICKTHQLDHSAHYLRLKFLMENRVQFYIPQPEEDIYELLYKEIEICPKVTQNIHIEKSDAAADNYGFLLSSVDEDGIRRLYVNSVKETGLASKKGLKAGDEILEINNRAAGTLNSSMLKDFLSQPSLGLLVRTYPEPEGGVELLENPPHRVDGPVDLGESPLAFLTSNPGHSLSSEQGSSAETAPEEGEGPDLESSDETDHSSKSTEQVAAFCRSLHEMSPSDSSPSPQDATSPQLATTRQLSDADKLRKVICELLETERTYVKDLNCLMERYLKPLQKETFLTQDELDVLFGNLTEMVEFQVEFLKTLEDGVRLVPDLEKLEKVDQFKKVLFSLGGSFLYYADRFKLYSAFCASHTKVPKVLVKAKTDTAFKAFLDAQNPRQQHSSTLESYLIKPIQRVLKYPLLLRELFALTDAESEEHYHLDVAIKTMNKVASHINEMQKIHEEFGAVFDQLIAEQTGEKKEVADLSMGDLLLHTSVIWLNPPASLGKWKKEPELAAFVFKTAVVLVYKDGSKQKKKLVGSHRLSIYEEWDPFRFRHMIPTEALQVRALPSADAEANAVCEIVHVKSESEGRPERVFHLCCSSPESRKDFLKSVHSILRDKHRRQLLKTESLPSAQQYVPFGGKRLCALKGARPAMSRAVSAPSKSLGRRRRRLARNRFTIDSDAISASSPEKEPQQPAGGGDTDRWVEEQFDLAQYEEQDDIKETDILSDDDEFCESLKGASVDRDLQEQLQAASISQRARGRRTLDSHASRMTQLKKQAALSGINGGLESASEEVIWVRREDFAPSRKLNTEI.

Residues 1-70 (MGNAESQNVD…TPSIPQSLAE (70 aa)) form a disordered region. Residue Gly2 is the site of N-myristoyl glycine attachment. Residues 8-19 (NVDHEFYGEKHA) are compositionally biased toward basic and acidic residues. Residues 20–49 (SLGRKHTSRSLRLSHKTRRTRHASSGKAIH) show a composition bias toward basic residues. The segment covering 53-67 (EVSTRSSSTPSIPQS) has biased composition (low complexity). Residues Ser231, Ser356, and Ser358 each carry the phosphoserine modification. 2 disordered regions span residues 305-380 (QISL…DRAR) and 393-422 (MSTTNSESLEEAGSAHSDEQSSGTLSSPGQ). Residues 340–359 (TTDTDLLSRRSNATNSSYSP) show a composition bias toward polar residues. Low complexity predominate over residues 367-376 (GSDSGSSSTG). Positions 412–422 (QSSGTLSSPGQ) are enriched in polar residues. Residues 434–549 (VRKAGALAVK…TAIHSACAAA (116 aa)) form the PH 1 domain. Ser695 is subject to Phosphoserine. In terms of domain architecture, RBD spans 765–832 (TPSWFCLPNN…QPEEDIYELL (68 aa)). Tyr829 is subject to Phosphotyrosine; by NTRK2. The PDZ domain maps to 845–908 (NIHIEKSDAA…NNRAAGTLNS (64 aa)). The tract at residues 933–1034 (GVELLENPPH…TSPQLATTRQ (102 aa)) is disordered. A compositionally biased stretch (polar residues) spans 958 to 975 (LTSNPGHSLSSEQGSSAE). The segment covering 977-990 (APEEGEGPDLESSD) has biased composition (acidic residues). Residues 1014–1028 (PSDSSPSPQDATSPQ) show a composition bias toward low complexity. The DH domain maps to 1040-1234 (KLRKVICELL…NKVASHINEM (195 aa)). A PH 2 domain is found at 1261 to 1397 (DLSMGDLLLH…KSVHSILRDK (137 aa)). Tyr1323 bears the Phosphotyrosine mark. Glycyl lysine isopeptide (Lys-Gly) (interchain with G-Cter in ubiquitin) cross-links involve residues Lys1404 and Lys1420. The segment at 1456-1481 (TIDSDAISASSPEKEPQQPAGGGDTD) is disordered. Position 1519 is a phosphoserine (Ser1519).

It belongs to the TIAM family. As to quaternary structure, component of the Par polarity complex, composed of at least phosphorylated PRKCZ, PARD3 and TIAM1. Interacts with BAIAP2. Interacts (via PDZ domain) with CNTNAP4, SDC1 and SDC3 (via C-terminus). Interacts with CD44, PARD3 and MAPK8IP2. Interacts with EPHA8; regulates clathrin-mediated endocytosis of EPHA8. Interacts with NTRK2; mediates the activation of RAC1 by BDNF. Ubiquitinated. Undergoes 'Lys-48' ubiquitination at Lys-1404 and Lys-1420 by a CUL3(KBTBD6/7) E3 ubiquitin ligase complex composed of CUL3, RBX1, KBTBD6 and KBTBD7. 'Lys-48' ubiquitination at Lys-1404 and Lys-1420 triggers proteasomal degradation. Ubiquitination at Lys-1404 and Lys-1420 by CUL3(KBTBD6/7) also requires the membrane-associated protein GABARAP and may therefore be spatially restricted within the cell. As to expression, highly expressed in brain and testis and at low or moderate levels in almost all other normal tissues. Found in virtually all analyzed tumor cell lines including B- and T-lymphomas, neuroblastomas, melanomas and carcinomas.

Its subcellular location is the cell junction. It is found in the cell membrane. Its function is as follows. Guanyl-nucleotide exchange factor that activates RHO-like proteins and connects extracellular signals to cytoskeletal activities. Activates RAC1, CDC42, and to a lesser extent RHOA and their downstream signaling to regulate processes like cell adhesion and cell migration. The polypeptide is Rho guanine nucleotide exchange factor TIAM1 (Mus musculus (Mouse)).